A 302-amino-acid polypeptide reads, in one-letter code: 4-diphosphocytidyl-2-C-methyl-D-erythritol kinase (302 aa).

Lys32 is an active-site residue. Pro115 to Ser125 lines the ATP pocket. Asp157 is an active-site residue.

Belongs to the GHMP kinase family. IspE subfamily.

The catalysed reaction is 4-CDP-2-C-methyl-D-erythritol + ATP = 4-CDP-2-C-methyl-D-erythritol 2-phosphate + ADP + H(+). It participates in isoprenoid biosynthesis; isopentenyl diphosphate biosynthesis via DXP pathway; isopentenyl diphosphate from 1-deoxy-D-xylulose 5-phosphate: step 3/6. Catalyzes the phosphorylation of the position 2 hydroxy group of 4-diphosphocytidyl-2C-methyl-D-erythritol. In Actinobacillus succinogenes (strain ATCC 55618 / DSM 22257 / CCUG 43843 / 130Z), this protein is 4-diphosphocytidyl-2-C-methyl-D-erythritol kinase.